The sequence spans 2153 residues: RNA-directed RNA polymerase L (2153 aa).

The Mn(2+) site is built by His-36, Glu-54, Asp-97, Glu-110, and Val-111. Lys-124 acts as the For endonuclease activity in catalysis. Residues 957–1143 enclose the RdRp catalytic domain; that stretch reads TGKKIRFKRK…AVNQEMWKSM (187 aa). Residue Asp-1100 participates in Mg(2+) binding.

Belongs to the Bunyavirales RNA polymerase family. Interacts with the viral nucleoprotein. Mn(2+) is required as a cofactor. Requires Mg(2+) as cofactor.

The protein resides in the host cytoplasm. It is found in the host perinuclear region. It catalyses the reaction RNA(n) + a ribonucleoside 5'-triphosphate = RNA(n+1) + diphosphate. In terms of biological role, RNA-dependent RNA polymerase, which is responsible for the replication and transcription of the viral RNA genome using antigenomic RNA as an intermediate. During transcription, synthesizes subgenomic RNAs and assures their capping by a cap-snatching mechanism, which involves the endonuclease activity cleaving the host capped pre-mRNAs. These short capped RNAs are then used as primers for viral transcription. Cleaves ssRNA substrates but not DNA. Seems to downregulate the expression of its own and heterologous mRNAs through its endonuclease activity. This Black Creek Canal orthohantavirus (BCCV) protein is RNA-directed RNA polymerase L.